A 991-amino-acid chain; its full sequence is MKNLNKFVSIALCSSLLGGMAFAQQTELGRNPNVRLLESTQQSVTKVQFRMDNLKFTEVQTPKGMAQVPTYTEGVNLSEKGMPTLPILSRSLAVSDTREMKVEVVSSKFIEKKNVLIAPSKGMIMRNEDPKKIPYVYGKSYSQNKFFPGEIATLDDPFILRDVRGQVVNFAPLQYNPVTKTLRIYTEITVAVSETSEQGKNILNKKGTFAGFEDTYKRMFMNYEPGRYTPVEEKQNGRMIVIVAKKYEGDIKDFVDWKNQRGLRTEVKVAEDIASPVTANAIQQFVKQEYEKEGNDLTYVLLVGDHKDIPAKITPGIKSDQVYGQIVGNDHYNEVFIGRFSCESKEDLKTQIDRTIHYERNITTEDKWLGQALCIASAEGGPSADNGESDIQHENVIANLLTQYGYTKIIKCYDPGVTPKNIIDAFNGGISLVNYTGHGSETAWGTSHFGTTHVKQLTNSNQLPFIFDVACVNGDFLFSMPCFAEALMRAQKDGKPTGTVAIIASTINQSWASPMRGQDEMNEILCEKHPNNIKRTFGGVTMNGMFAMVEKYKKDGEKMLDTWTVFGDPSLLVRTLVPTKMQVTAPAQINLTDASVNVSCDYNGAIATISANGKMFGSAVVENGTATINLTGLTNESTLTLTVVGYNKETVIKTINTNGEPNPYQPVSNLTATTQGQKVTLKWDAPSTKTNATTNTARSVDGIRELVLLSVSDAPELLRSGQAEIVLEAHDVWNDGSGYQILLDADHDQYGQVIPSDTHTLWPNCSVPANLFAPFEYTVPENADPSCSPTNMIMDGTASVNIPAGTYDFAIAAPQANAKIWIAGQGPTKEDDYVFEAGKKYHFLMKKMGSGDGTELTISEGGGSDYTYTVYRDGTKIKEGLTETTYRDAGMSAQSHEYCVEVKYAAGVSPKVCVDYIPDGVADVTAQKPYTLTVVGKTITVTCQGEAMIYDMNGRRLAAGRNTVVYTAQGGYYAVMVVVDGKSYVEKLAVK.

Positions 1–24 (MKNLNKFVSIALCSSLLGGMAFAQ) are cleaved as a signal peptide. Positions 25-227 (QTELGRNPNV…RMFMNYEPGR (203 aa)) are excised as a propeptide. The Ca(2+) site is built by D305, V327, D330, Y332, E334, E388, and H393. Residue H438 is the Proton donor of the active site. The Nucleophile role is filled by C471. Residues F476, E485, D519, E520, E523, and H529 each coordinate Ca(2+).

Belongs to the peptidase C25 family.

It localises to the secreted. It catalyses the reaction Hydrolysis of proteins and small molecule substrates, with a preference for Arg in P1.. With respect to regulation, requires cysteine for activation and Ca(2+) and/or Mg(2+) for stabilization. It is stimulated by glycine-containing dipeptides. It is resistant to inhibition by proteinase inhibitors in human plasma. Functionally, thiol protease. Acts synergistically with RgpB to catalyze the maturation of fimbrial subunits, such as FimA. Its proteolytic activity is a major factor in both periodontal tissue destruction and in evasion of host defense mechanisms. The polypeptide is Gingipain R1 (rgpA) (Porphyromonas gingivalis (Bacteroides gingivalis)).